We begin with the raw amino-acid sequence, 470 residues long: Cytochrome P450 monooxygenase sirC (470 aa).

The helical transmembrane segment at 12 to 34 threads the bilayer; sequence LRGMVVGTIMLLCYRYGLALSIL. N-linked (GlcNAc...) asparagine glycosylation occurs at asparagine 399. Position 410 (cysteine 410) interacts with heme.

This sequence belongs to the cytochrome P450 family. Heme serves as cofactor.

It localises to the membrane. Its pathway is mycotoxin biosynthesis. Functionally, cytochrome P450 monooxygenase; part of the gene cluster that mediates the biosynthesis of sirodesmin PL, an epipolythiodioxopiperazine (ETP) characterized by a disulfide bridged cyclic dipeptide and that acts as a phytotoxin which is involved in the blackleg didease of canola. SirD catalyzes the O-prenylation of L-tyrosine (L-Tyr) in the presence of dimethylallyl diphosphate (DMAPP) to yield 4-O-dimethylallyl-L-Tyr, and therefore represents probably the first pathway-specific enzyme in the biosynthesis of sirodesmin PL. 4-O-dimethylallyl-L-Tyr, then undergoes condensation with L-Ser in a reaction catalyzed by the non-ribosomal peptide synthase sirP to form the diketopiperazine (DKP) backbone. Further bishydroxylation of the DKP performed by the cytochrome P450 monooxygenase sirC leads to the production of the intermediate phomamide. This step is essential to form the reactive thiol group required for toxicity of sirodesmin PL. The next steps of sirodesmin biosynthesis are not well understood yet, but some predictions could be made from intermediate compounds identification. Phomamide is converted into phomalizarine via oxidation, probably by sirT. Further oxidation, methylation (by sirM or sirN) and reduction steps convert phomalizarine to deacetyl sirodesmin. Finally, acetyltransferase sirH probably acetylates deacetyl sirodesmin to produce sirodesmin PL. The protein is Cytochrome P450 monooxygenase sirC of Leptosphaeria maculans (Blackleg fungus).